A 737-amino-acid chain; its full sequence is Autophagy-related protein 22 (737 aa).

The tract at residues 115–154 is disordered; it reads RMSPANAGDNSDSYPYGDDTDGDSSSGLPPPRYPGDDTRP. Positions 125–141 are enriched in low complexity; it reads SDSYPYGDDTDGDSSSG. The next 4 helical transmembrane spans lie at 166 to 186, 232 to 252, 264 to 284, and 289 to 309; these read YAFA…PILL, SFAM…VVSI, KLLL…IFIS, and LIGA…FVLL. The segment at 327–353 is disordered; the sequence is GDYGSPGYATTEEGDDEDDEYQEDSTR. Positions 338–349 are enriched in acidic residues; sequence EEGDDEDDEYQE. N-linked (GlcNAc...) asparagine glycosylation occurs at Asn-354. Residues 395–415 form a helical membrane-spanning segment; sequence GIGIGYIAGLFLQCVAIAILI. N-linked (GlcNAc...) asparagine glycosylation is present at Asn-419. 7 helical membrane passes run 426-446, 487-507, 524-544, 559-579, 593-613, 632-652, and 661-681; these read IVLC…AMWL, LVDI…IATT, WALG…AFSW, ILAC…GYLP, WEMY…SGYC, LYAI…GAII, and AFWF…FINV.

It belongs to the ATG22 family.

It localises to the vacuole membrane. Its function is as follows. Vacuolar effluxer which mediate the efflux of amino acids resulting from autophagic degradation. The release of autophagic amino acids allows the maintenance of protein synthesis and viability during nitrogen starvation. In Neurospora crassa (strain ATCC 24698 / 74-OR23-1A / CBS 708.71 / DSM 1257 / FGSC 987), this protein is Autophagy-related protein 22 (apg-11).